We begin with the raw amino-acid sequence, 462 residues long: L-seryl-tRNA(Sec) selenium transferase (462 aa).

Lysine 293 carries the N6-(pyridoxal phosphate)lysine modification.

This sequence belongs to the SelA family. Requires pyridoxal 5'-phosphate as cofactor.

The protein resides in the cytoplasm. The catalysed reaction is L-seryl-tRNA(Sec) + selenophosphate + H(+) = L-selenocysteinyl-tRNA(Sec) + phosphate. It functions in the pathway aminoacyl-tRNA biosynthesis; selenocysteinyl-tRNA(Sec) biosynthesis; selenocysteinyl-tRNA(Sec) from L-seryl-tRNA(Sec) (bacterial route): step 1/1. Converts seryl-tRNA(Sec) to selenocysteinyl-tRNA(Sec) required for selenoprotein biosynthesis. The chain is L-seryl-tRNA(Sec) selenium transferase from Clostridium botulinum (strain Okra / Type B1).